Consider the following 429-residue polypeptide: Serine hydroxymethyltransferase (429 aa).

120-122 (GHI) is a (6S)-5,6,7,8-tetrahydrofolate binding site. Lys226 is modified (N6-(pyridoxal phosphate)lysine).

The protein belongs to the SHMT family. As to quaternary structure, homodimer. It depends on pyridoxal 5'-phosphate as a cofactor.

The protein localises to the cytoplasm. Its pathway is amino-acid biosynthesis; glycine biosynthesis; glycine from L-serine: step 1/1. Its function is as follows. Catalyzes the reversible interconversion of serine and glycine with a modified folate serving as the one-carbon carrier. Also exhibits a pteridine-independent aldolase activity toward beta-hydroxyamino acids, producing glycine and aldehydes, via a retro-aldol mechanism. The polypeptide is Serine hydroxymethyltransferase (Pyrobaculum arsenaticum (strain DSM 13514 / JCM 11321 / PZ6)).